The sequence spans 194 residues: NADH-quinone oxidoreductase subunit B (194 aa).

[4Fe-4S] cluster contacts are provided by cysteine 73, cysteine 74, cysteine 138, and cysteine 168.

Belongs to the complex I 20 kDa subunit family. In terms of assembly, NDH-1 is composed of 14 different subunits. Subunits NuoB, C, D, E, F, and G constitute the peripheral sector of the complex. Requires [4Fe-4S] cluster as cofactor.

It is found in the cell inner membrane. The enzyme catalyses a quinone + NADH + 5 H(+)(in) = a quinol + NAD(+) + 4 H(+)(out). NDH-1 shuttles electrons from NADH, via FMN and iron-sulfur (Fe-S) centers, to quinones in the respiratory chain. The immediate electron acceptor for the enzyme in this species is believed to be ubiquinone. Couples the redox reaction to proton translocation (for every two electrons transferred, four hydrogen ions are translocated across the cytoplasmic membrane), and thus conserves the redox energy in a proton gradient. This chain is NADH-quinone oxidoreductase subunit B, found in Rhizobium johnstonii (strain DSM 114642 / LMG 32736 / 3841) (Rhizobium leguminosarum bv. viciae).